The sequence spans 142 residues: MNYFLIFLTLLVAVIVEKIEELVAIRFFSSYVLDIARMEAEIEEYKELSMLAMLSGDREAYRGFQDMMNEIYGRVFFRKISFFTPLYFLLLSPYIVALQFLGVENSLSIVLPVAVLYFSAKLFYGMVRDFVKSYVDYRKANN.

The next 2 helical transmembrane spans lie at 75 to 97 (VFFRKISFFTPLYFLLLSPYIVA) and 107 to 124 (LSIVLPVAVLYFSAKLFY).

It is found in the cell membrane. This is an uncharacterized protein from Archaeoglobus fulgidus (strain ATCC 49558 / DSM 4304 / JCM 9628 / NBRC 100126 / VC-16).